The following is a 317-amino-acid chain: Beta-ketoacyl-[acyl-carrier-protein] synthase III (317 aa).

Active-site residues include Cys112 and His244. The ACP-binding stretch occupies residues 245–249 (QANLR). Asn274 is an active-site residue.

It belongs to the thiolase-like superfamily. FabH family. In terms of assembly, homodimer.

Its subcellular location is the cytoplasm. It catalyses the reaction malonyl-[ACP] + acetyl-CoA + H(+) = 3-oxobutanoyl-[ACP] + CO2 + CoA. The protein operates within lipid metabolism; fatty acid biosynthesis. Its function is as follows. Catalyzes the condensation reaction of fatty acid synthesis by the addition to an acyl acceptor of two carbons from malonyl-ACP. Catalyzes the first condensation reaction which initiates fatty acid synthesis and may therefore play a role in governing the total rate of fatty acid production. Possesses both acetoacetyl-ACP synthase and acetyl transacylase activities. Its substrate specificity determines the biosynthesis of branched-chain and/or straight-chain of fatty acids. In Serratia proteamaculans (strain 568), this protein is Beta-ketoacyl-[acyl-carrier-protein] synthase III.